Consider the following 451-residue polypeptide: Tubulin alpha-1A chain (451 aa).

The short motif at 1–4 is the MREC motif element; that stretch reads MREC. Residues Q11, E71, S140, G144, T145, T179, N206, and N228 each contribute to the GTP site. E71 is a Mg(2+) binding site. Residue E254 is part of the active site. The disordered stretch occupies residues 432–451; it reads YEEVGVDSVEGEGEEEGEEY. E445 carries the 5-glutamyl polyglutamate modification.

It belongs to the tubulin family. As to quaternary structure, dimer of alpha and beta chains. A typical microtubule is a hollow water-filled tube with an outer diameter of 25 nm and an inner diameter of 15 nM. Alpha-beta heterodimers associate head-to-tail to form protofilaments running lengthwise along the microtubule wall with the beta-tubulin subunit facing the microtubule plus end conferring a structural polarity. Microtubules usually have 13 protofilaments but different protofilament numbers can be found in some organisms and specialized cells. It depends on Mg(2+) as a cofactor. Post-translationally, some glutamate residues at the C-terminus are polyglycylated, resulting in polyglycine chains on the gamma-carboxyl group. Glycylation is mainly limited to tubulin incorporated into axonemes (cilia and flagella) whereas glutamylation is prevalent in neuronal cells, centrioles, axonemes, and the mitotic spindle. Both modifications can coexist on the same protein on adjacent residues, and lowering polyglycylation levels increases polyglutamylation, and reciprocally. The precise function of polyglycylation is still unclear. Some glutamate residues at the C-terminus are polyglutamylated, resulting in polyglutamate chains on the gamma-carboxyl group. Polyglutamylation plays a key role in microtubule severing by spastin (SPAST). SPAST preferentially recognizes and acts on microtubules decorated with short polyglutamate tails: severing activity by SPAST increases as the number of glutamates per tubulin rises from one to eight, but decreases beyond this glutamylation threshold. In terms of processing, undergoes a tyrosination/detyrosination cycle, the cyclic removal and re-addition of a C-terminal tyrosine residue by the enzymes tubulin tyrosine carboxypeptidase (MATCAP1, VASH1 or VASH2) and tubulin tyrosine ligase (TTL), respectively. Post-translationally, tyrosination promotes microtubule interaction with CAP-Gly microtubule plus-end tracking proteins. Tyrosinated tubulins regulate the initiation of dynein-driven motility. Detyrosination is involved in metaphase plate congression by guiding chromosomes during mitosis. Detyrosination increases microtubules-dependent mechanotransduction in dystrophic cardiac and skeletal muscle. In cardiomyocytes, detyrosinated microtubules are required to resist to contractile compression during contraction.

Its subcellular location is the cytoplasm. The protein resides in the cytoskeleton. The enzyme catalyses GTP + H2O = GDP + phosphate + H(+). In terms of biological role, tubulin is the major constituent of microtubules, a cylinder consisting of laterally associated linear protofilaments composed of alpha- and beta-tubulin heterodimers. Microtubules grow by the addition of GTP-tubulin dimers to the microtubule end, where a stabilizing cap forms. Below the cap, tubulin dimers are in GDP-bound state, owing to GTPase activity of alpha-tubulin. This chain is Tubulin alpha-1A chain (TUBA1A), found in Gallus gallus (Chicken).